Reading from the N-terminus, the 176-residue chain is dCTP deaminase (176 aa).

Residues 102 to 107 (RSTFAR) and Asp-118 each bind dCTP. The active-site Proton donor/acceptor is the Glu-128. Residues Tyr-160 and Gln-167 each coordinate dCTP.

The protein belongs to the dCTP deaminase family. In terms of assembly, homotrimer.

The catalysed reaction is dCTP + H2O + H(+) = dUTP + NH4(+). It functions in the pathway pyrimidine metabolism; dUMP biosynthesis; dUMP from dCTP (dUTP route): step 1/2. Functionally, catalyzes the deamination of dCTP to dUTP. This Hyperthermus butylicus (strain DSM 5456 / JCM 9403 / PLM1-5) protein is dCTP deaminase.